The chain runs to 162 residues: Epoxidase pydX (162 aa).

The signal sequence occupies residues 1-26; it reads MSLIALPLRLLRLLPAITSTWVLAFA. The next 2 membrane-spanning stretches (helical) occupy residues 62 to 82 and 89 to 109; these read WILIVVYPINYALGVVNLFVG and TGAMSWYTIGLLFSLAHMGYM. Residues Asn-127 and Asn-139 are each glycosylated (N-linked (GlcNAc...) asparagine).

Belongs to the epoxidase xenD family.

The protein resides in the membrane. It functions in the pathway mycotoxin biosynthesis. Functionally, epoxidase; part of the gene cluster that mediates the biosynthesis of pyrrocidines, fungal natural products containing a macrocyclic para-cyclophane connected to a decahydrofluorene ring system that show potent antibiotic activities toward Gram-negative bacteria. Within the pathway, pydX functions synergistically with pydB, pydE and pydZ to form the cyclophane. The pathway begins with the PKS-NRPS pydA which, with the help of the trans-enoyl reductase pydC, synthesizes the polyketide-tyrosyl acyl thioester product which can be reductively off-loaded by the terminal reductase (R) domain in pydA. The alpha/beta hydrolase pydG is then required to catalyze the subsequent Knoevenagel condensation that affords the 3-pyrrolin-2-one ring, whereas the four proteins pydB, pydE, pydX and pydZ then function synergistically to form the cyclophane. PydB and the membrane-bound pydX and pydZ are lipid-binding proteins that can sequester and mold the pdyG product into the inverse S-shape. Binding of the medium chain reductase pydE to the complex would trigger the cascade oxidative cyclization. PydY is involved in the Diels-Alder cycloaddition that forms the decahydrofluorene core. Additional non-enzymatic hydroxylation yields pyrrocidine A2 which can be further reduced into pyrrocidine B by an endogenous reductase. In Acremonium sp, this protein is Epoxidase pydX.